Reading from the N-terminus, the 289-residue chain is E3 ubiquitin-protein ligase MARCHF8 (289 aa).

Residues 1 to 68 (MNMPLHQISA…SAPVSSFPRT (68 aa)) are disordered. The segment covering 25-39 (KTKEKEREEQNEKTL) has biased composition (basic and acidic residues). A compositionally biased stretch (low complexity) spans 50-64 (SKAGGSSVASAPVSS). The RING-CH-type zinc finger occupies 70-131 (VTPSNQDICR…ELCKYEFIME (62 aa)). Zn(2+) contacts are provided by cysteine 78, cysteine 81, cysteine 95, cysteine 97, histidine 105, cysteine 108, cysteine 121, and cysteine 124. The next 2 membrane-spanning stretches (helical) occupy residues 155–175 (CSVT…YVLI) and 195–215 (FWTK…FMYV).

As to quaternary structure, interacts with CD86.

It localises to the golgi apparatus membrane. Its subcellular location is the endoplasmic reticulum membrane. The protein localises to the cytoplasmic vesicle membrane. It is found in the lysosome membrane. The protein resides in the early endosome membrane. It carries out the reaction S-ubiquitinyl-[E2 ubiquitin-conjugating enzyme]-L-cysteine + [acceptor protein]-L-lysine = [E2 ubiquitin-conjugating enzyme]-L-cysteine + N(6)-ubiquitinyl-[acceptor protein]-L-lysine.. Its pathway is protein modification; protein ubiquitination. Its function is as follows. E3 ubiquitin-protein ligase that plays several important roles in innate immunity and adaptive immunity. Mediates ubiquitination of CD86 and MHC class II proteins, such as HLA-DR alpha and beta, and promotes their subsequent endocytosis and sorting to lysosomes via multivesicular bodies. Possesses a very broad antiviral activity by specifically inactivating different viral fusion proteins. Targets and ubiquitinates cytoplasmic lysine residues of viral envelope glycoproteins with single transmembrane domains leading to their lysosomal degradation. Mediates the regulation of constitutive ubiquitination and trafficking of the viral restriction factor BST2 within the endocytic pathway. Plays a role in maintenance of immune tolerance to self by promoting the turnover and proteasomal degradation of PD-L1/CD274 via ubiquitination. Catalyzes the 'Lys-63'-linked polyubiquitylation of cGAS thereby inhibiting its DNA binding ability and impairing its antiviral innate immunity. Negatively regulates IL7-mediated T-cell homeostasis by mediating 'Lys-27'-linked polyubiquitination of IL7R, leading to its lysosomal degradation. The protein is E3 ubiquitin-protein ligase MARCHF8 (MARCHF8) of Bos taurus (Bovine).